Reading from the N-terminus, the 113-residue chain is U11-theraphotoxin-Hhn1q (113 aa).

Positions 1–21 (MNTVRVTFLLVFVLAVSLGQA) are cleaved as a signal peptide. Residues 22–74 (DKDENRMEMQEKTEQGKSYLDFAENLLLQKLEELEAKLLEEDSEESRNSRQKR) constitute a propeptide that is removed on maturation. A disordered region spans residues 61–82 (EEDSEESRNSRQKRCIGEGVPC). Intrachain disulfides connect Cys-75–Cys-90, Cys-82–Cys-95, and Cys-89–Cys-110.

The protein belongs to the neurotoxin 14 (magi-1) family. 01 (HNTX-16) subfamily. In terms of tissue distribution, expressed by the venom gland.

The protein resides in the secreted. Functionally, probable ion channel inhibitor. This Cyriopagopus hainanus (Chinese bird spider) protein is U11-theraphotoxin-Hhn1q.